The sequence spans 377 residues: MKLKFDLKKKNGNARRGQLTFERGTVQTPAFMPVGTYGTVKGMTPEEVKGTGAEILLGNTFHLWLRPGQEVMKMHGDLHDFMNWHGPILTDSGGFQVFSLGKMRTITEKGVHFRNPVNGDKIFMDAEKSMEIQKDLGSDIVMIFDECTPYPATHNEAKKSMEMSLRWAQRSRDHFDKLENPNNLFGIVQGGVYEDLRDVSVKGLTEIGFDGYAVGGLAVGEPKEDMHRILEHTCPQLPEDKPRYLMGVGKPEDLVEGVRRGIDMFDCVMPTRNARNGHLFVTGGVIKIRNAKHKTDTTPLDPHCDCYTCQNYSKSYLHHLERCNEILGARLNTIHNLRYYQRLMESIRKAIDEDRFDEFVQEFYARRDREVPPLSKA.

Residue aspartate 91 is the Proton acceptor of the active site. Substrate contacts are provided by residues 91-95 (DSGGF), aspartate 145, glutamine 189, and glycine 216. Positions 247–253 (GVGKPED) are RNA binding. Catalysis depends on aspartate 266, which acts as the Nucleophile. Residues 271-275 (TRNAR) form an RNA binding; important for wobble base 34 recognition region. Zn(2+) is bound by residues cysteine 304, cysteine 306, cysteine 309, and histidine 335.

The protein belongs to the queuine tRNA-ribosyltransferase family. As to quaternary structure, homodimer. Within each dimer, one monomer is responsible for RNA recognition and catalysis, while the other monomer binds to the replacement base PreQ1. Zn(2+) serves as cofactor.

The enzyme catalyses 7-aminomethyl-7-carbaguanine + guanosine(34) in tRNA = 7-aminomethyl-7-carbaguanosine(34) in tRNA + guanine. It participates in tRNA modification; tRNA-queuosine biosynthesis. In terms of biological role, catalyzes the base-exchange of a guanine (G) residue with the queuine precursor 7-aminomethyl-7-deazaguanine (PreQ1) at position 34 (anticodon wobble position) in tRNAs with GU(N) anticodons (tRNA-Asp, -Asn, -His and -Tyr). Catalysis occurs through a double-displacement mechanism. The nucleophile active site attacks the C1' of nucleotide 34 to detach the guanine base from the RNA, forming a covalent enzyme-RNA intermediate. The proton acceptor active site deprotonates the incoming PreQ1, allowing a nucleophilic attack on the C1' of the ribose to form the product. After dissociation, two additional enzymatic reactions on the tRNA convert PreQ1 to queuine (Q), resulting in the hypermodified nucleoside queuosine (7-(((4,5-cis-dihydroxy-2-cyclopenten-1-yl)amino)methyl)-7-deazaguanosine). The chain is Queuine tRNA-ribosyltransferase from Vibrio parahaemolyticus serotype O3:K6 (strain RIMD 2210633).